Consider the following 248-residue polypeptide: MSARPKLVVGNWKLHGSLNGNAELLEKIKAAGQTRAALAVCAPFPYLAQCQSVLAGSSVAWGAQDVSAETRGAFTGEVAASMLSEFGCGYAIVGHSERRTYHGETDAQVAIKALRALEHGITPIVCVGETLAQREAGETELVVARQLEAVLESLSVEQLGHIVVAYEPVWAIGTGKTATSEQAQAVHAFLRGRVAACDAGVAQRMPILYGGSVKPDNAAELFTMADIDGGLIGGASLKAEDFLAIGRA.

Residue 11–13 (NWK) participates in substrate binding. His95 acts as the Electrophile in catalysis. The active-site Proton acceptor is Glu167. Substrate is bound by residues Gly173, Ser212, and 233–234 (GG).

This sequence belongs to the triosephosphate isomerase family. In terms of assembly, homodimer.

The protein localises to the cytoplasm. It catalyses the reaction D-glyceraldehyde 3-phosphate = dihydroxyacetone phosphate. Its pathway is carbohydrate biosynthesis; gluconeogenesis. The protein operates within carbohydrate degradation; glycolysis; D-glyceraldehyde 3-phosphate from glycerone phosphate: step 1/1. In terms of biological role, involved in the gluconeogenesis. Catalyzes stereospecifically the conversion of dihydroxyacetone phosphate (DHAP) to D-glyceraldehyde-3-phosphate (G3P). The sequence is that of Triosephosphate isomerase from Ralstonia nicotianae (strain ATCC BAA-1114 / GMI1000) (Ralstonia solanacearum).